We begin with the raw amino-acid sequence, 190 residues long: Imidazoleglycerol-phosphate dehydratase (190 aa).

The protein belongs to the imidazoleglycerol-phosphate dehydratase family.

The protein resides in the cytoplasm. It carries out the reaction D-erythro-1-(imidazol-4-yl)glycerol 3-phosphate = 3-(imidazol-4-yl)-2-oxopropyl phosphate + H2O. The protein operates within amino-acid biosynthesis; L-histidine biosynthesis; L-histidine from 5-phospho-alpha-D-ribose 1-diphosphate: step 6/9. This is Imidazoleglycerol-phosphate dehydratase from Methanococcus maripaludis (strain C7 / ATCC BAA-1331).